The sequence spans 204 residues: MATLTAKERTDFTRSSLRNIRTSGHVPGIIYGKDTGNKPVSLDSVELIKTLRDEGKNAVITLEVSGEKHSVMVTDLQTDPLKNEITHADFQVVNMSEDIEVEVPIHLTGEAIGVKNGGVLQQPLYALTVKAKPKAIPQTIEADISSLDVNEVLTIADLPAGGDYSFNHESDEVVASILPPQQQEAAEVDEEESADAQPEGENEQ.

The tract at residues Ile-177–Gln-204 is disordered. Over residues Ala-186 to Gln-204 the composition is skewed to acidic residues.

Belongs to the bacterial ribosomal protein bL25 family. CTC subfamily. In terms of assembly, part of the ribosome (presumably the 50S subunit) under heat-stress but not control growth conditions. Binds 5S rRNA.

In terms of biological role, not required for exponential growth; probably functions in vegetatively growing cells, maybe required for accurate translation under stress conditions. In Bacillus subtilis (strain 168), this protein is General stress protein Ctc.